Here is a 215-residue protein sequence, read N- to C-terminus: uncharacterized protein (215 aa).

The signal sequence occupies residues 1–29 (MDKVQSGFLILFLFLMECQLHLCLPYADG). The Extracellular segment spans residues 30–100 (LHPTGNITGL…IIRHRPALVK (71 aa)). Residues 101 to 121 (VILISSVAFSIALICGMAISY) form a helical membrane-spanning segment. Residues 122–215 (MIYRLAQAEE…ASHNGKMEDL (94 aa)) lie on the Cytoplasmic side of the membrane. Residues 191–215 (LKEEQNSVTENKTKNASHNGKMEDL) are disordered. Residues 196–208 (NSVTENKTKNASH) show a composition bias toward polar residues.

The protein resides in the membrane. This is an uncharacterized protein from Homo sapiens (Human).